A 382-amino-acid polypeptide reads, in one-letter code: Secreted triacylglycerol lipase LIP5 (382 aa).

A disulfide bridge links Cys-40 with Cys-211. Asn-115 carries N-linked (GlcNAc...) asparagine glycosylation. Ser-124 functions as the Nucleophile in the catalytic mechanism. N-linked (GlcNAc...) asparagine glycans are attached at residues Asn-157 and Asn-232. Active-site residues include Asp-271 and His-305. Residue Asn-346 is glycosylated (N-linked (GlcNAc...) asparagine).

Belongs to the AB hydrolase superfamily. Lipase family. Class Lip subfamily.

Its subcellular location is the secreted. The catalysed reaction is a triacylglycerol + H2O = a diacylglycerol + a fatty acid + H(+). It carries out the reaction a monoacylglycerol + H2O = glycerol + a fatty acid + H(+). The enzyme catalyses a diacylglycerol + H2O = a monoacylglycerol + a fatty acid + H(+). Secreted lipase that hydrolyzes acylglycerol lipids such as triacylglycerols and consequently releases free fatty acid. Can hydrolyze 4-nitrophenyl palmitate to release 4-nitrophenol and palmitoic acid. Due to an absence of fatty acid synthase genes in Malassezia species, secretory lipases are essential for the yeast to generate free fatty acids from degradation of sebum and assimilate them as lipid sources for growth. Plays important roles not only in lipid metabolism but also in the immune response of host cells and pathogenesis. This is Secreted triacylglycerol lipase LIP5 from Malassezia furfur (Pityriasis versicolor infection agent).